Reading from the N-terminus, the 222-residue chain is MTDYSAFEVMGPIMVGPSSSHTAGACKIANVATSIVSNNYNQVEFQLHGSFAHTFKGHGTDRALVGGILGFEPDDDRIKTSFELAKQAGLNYIFTTTNLGDNYHPNSVKIVFSYPNGEEEYVIGSSIGGGAMKIVNINGIAIEFRGEYSTILLEYPEQRGVISYVSSLLTGSEYNIESLNTKKNKLTNIVTLTVEIDKPLTESLKSAILGVERFTTAKYVEV.

In terms of domain architecture, ACT spans 150–222 (TILLEYPEQR…RFTTAKYVEV (73 aa)).

Belongs to the iron-sulfur dependent L-serine dehydratase family. In terms of assembly, heterooctamer of four alpha chains and four beta chains. [4Fe-4S] cluster serves as cofactor.

The enzyme catalyses L-serine = pyruvate + NH4(+). It participates in carbohydrate biosynthesis; gluconeogenesis. The chain is L-serine dehydratase, beta chain (sdhB) from Peptoniphilus asaccharolyticus (Peptostreptococcus asaccharolyticus).